The sequence spans 274 residues: Large ribosomal subunit protein uL2 (274 aa).

2 disordered regions span residues 28-54 (APHA…TRHI) and 224-274 (VAMN…RRRK). A compositionally biased stretch (basic and acidic residues) spans 263–274 (KRTDKMIVRRRK).

The protein belongs to the universal ribosomal protein uL2 family. In terms of assembly, part of the 50S ribosomal subunit. Forms a bridge to the 30S subunit in the 70S ribosome.

One of the primary rRNA binding proteins. Required for association of the 30S and 50S subunits to form the 70S ribosome, for tRNA binding and peptide bond formation. It has been suggested to have peptidyltransferase activity; this is somewhat controversial. Makes several contacts with the 16S rRNA in the 70S ribosome. This chain is Large ribosomal subunit protein uL2, found in Pseudomonas syringae pv. tomato (strain ATCC BAA-871 / DC3000).